The following is a 592-amino-acid chain: Protein kinase C zeta type (592 aa).

One can recognise a PB1 domain in the interval 15–98; sequence RVRLKAHYGG…EVLIIHVFPS (84 aa). The interaction with SQSTM1 stretch occupies residues 79–145; sequence AFRLACQGRD…KRFNRRAYCG (67 aa). The Phorbol-ester/DAG-type zinc-finger motif lies at 130-180; it reads GHLFQAKRFNRRAYCGQCSERIWGLARQGYRCINCKLLVHKRCHVLVPLTC. Positions 252-518 constitute a Protein kinase domain; sequence FDLIRVIGRG…FSDIKSHAFF (267 aa). ATP-binding positions include 258-266 and K281; that span reads IGRGSYAKV. D376 (proton acceptor) is an active-site residue. At T410 the chain carries Phosphothreonine; by PDPK1 and PI3K. Residues 519-590 enclose the AGC-kinase C-terminal domain; sequence RSIDWDLLEK…INPLLLSAEE (72 aa). At T560 the chain carries Phosphothreonine. S591 carries the phosphoserine modification.

The protein belongs to the protein kinase superfamily. AGC Ser/Thr protein kinase family. PKC subfamily. In terms of assembly, interacts with PARD6A, PARD6B and PARD6G. Part of a complex with PARD3, PARD6A or PARD6B or PARD6G and CDC42 or RAC1. Interacts with ADAP1/CENTA1. Forms a ternary complex with SQSTM1 and KCNAB2. Forms another ternary complex with SQSTM1 and GABRR3. Forms a complex with SQSTM1 and MAP2K5. Interacts (via the protein kinase domain) with WWC1. Forms a tripartite complex with WWC1 and DDR1, but predominantly in the absence of collagen. Component of the Par polarity complex, composed of at least phosphorylated PRKCZ, PARD3 and TIAM1. Interacts with PDPK1 (via N-terminal region). Interacts with WDFY2 (via WD repeats 1-3). Interacts with VAMP2. Forms a complex with WDFY2 and VAMP2. Interacts with APPL1. Interacts with WWC1, WWC2 and WWC3. In terms of processing, CDH5 is required for its phosphorylation at Thr-410. Phosphorylated by protein kinase PDPK1; phosphorylation is inhibited by the apoptotic C-terminal cleavage product of PKN2. Phosphorylation at Thr-410 by PI3K activates the kinase. Isoform 1: In brain, expressed in hippocampus, neocortex and cerebellum (at protein level). Also expressed in lung, liver, kidney, testis and to a lesser extent in pancreas, intestine and skin (at protein level). Isoform 2: Specifically expressed in brain where it localizes to the hippocampus, neocortex and cerebellum (at protein level).

It is found in the cytoplasm. The protein resides in the endosome. The protein localises to the cell junction. Its subcellular location is the membrane. The catalysed reaction is L-seryl-[protein] + ATP = O-phospho-L-seryl-[protein] + ADP + H(+). It carries out the reaction L-threonyl-[protein] + ATP = O-phospho-L-threonyl-[protein] + ADP + H(+). Its activity is regulated as follows. Atypical PKCs (PRKCI and PRKCZ) exhibit an elevated basal enzymatic activity (that may be due to the interaction with SMG1 or SQSTM1) and are not regulated by diacylglycerol, phosphatidylserine, phorbol esters or calcium ions. Two specific sites, Thr-410 (activation loop of the kinase domain) and Thr-560 (turn motif), need to be phosphorylated for its full activation. Phosphatidylinositol 3,4,5-trisphosphate might be a physiological activator. Isoform 2: Constitutively active. Functionally, calcium- and diacylglycerol-independent serine/threonine-protein kinase that functions in phosphatidylinositol 3-kinase (PI3K) pathway and mitogen-activated protein (MAP) kinase cascade, and is involved in NF-kappa-B activation, mitogenic signaling, cell proliferation, cell polarity, inflammatory response and maintenance of long-term potentiation (LTP). Upon lipopolysaccharide (LPS) treatment in macrophages, or following mitogenic stimuli, functions downstream of PI3K to activate MAP2K1/MEK1-MAPK1/ERK2 signaling cascade independently of RAF1 activation. Required for insulin-dependent activation of AKT3, but may function as an adapter rather than a direct activator. Upon insulin treatment may act as a downstream effector of PI3K and contribute to the activation of translocation of the glucose transporter SLC2A4/GLUT4 and subsequent glucose transport in adipocytes. In EGF-induced cells, binds and activates MAP2K5/MEK5-MAPK7/ERK5 independently of its kinase activity and can activate JUN promoter through MEF2C. Through binding with SQSTM1/p62, functions in interleukin-1 signaling and activation of NF-kappa-B with the specific adapters RIPK1 and TRAF6. Participates in TNF-dependent transactivation of NF-kappa-B by phosphorylating and activating IKBKB kinase, which in turn leads to the degradation of NF-kappa-B inhibitors. In migrating astrocytes, forms a cytoplasmic complex with PARD6A and is recruited by CDC42 to function in the establishment of cell polarity along with the microtubule motor and dynein. In association with FEZ1, stimulates neuronal differentiation in PC12 cells. In the inflammatory response, is required for the T-helper 2 (Th2) differentiation process, including interleukin production, efficient activation of JAK1 and the subsequent phosphorylation and nuclear translocation of STAT6. May be involved in development of allergic airway inflammation (asthma), a process dependent on Th2 immune response. In the NF-kappa-B-mediated inflammatory response, can relieve SETD6-dependent repression of NF-kappa-B target genes by phosphorylating the RELA subunit at 'Ser-311'. Phosphorylates VAMP2 in vitro. Phosphorylates and activates LRRK1, which phosphorylates RAB proteins involved in intracellular trafficking. Its function is as follows. Involved in late synaptic long term potentiation phase in CA1 hippocampal cells and long term memory maintenance. The sequence is that of Protein kinase C zeta type (Prkcz) from Rattus norvegicus (Rat).